The chain runs to 121 residues: Large ribosomal subunit protein uL18 (121 aa).

Belongs to the universal ribosomal protein uL18 family. In terms of assembly, part of the 50S ribosomal subunit; part of the 5S rRNA/L5/L18/L25 subcomplex. Contacts the 5S and 23S rRNAs.

Functionally, this is one of the proteins that bind and probably mediate the attachment of the 5S RNA into the large ribosomal subunit, where it forms part of the central protuberance. The polypeptide is Large ribosomal subunit protein uL18 (Pelobacter propionicus (strain DSM 2379 / NBRC 103807 / OttBd1)).